The primary structure comprises 309 residues: Methionyl-tRNA formyltransferase (309 aa).

112 to 115 contacts (6S)-5,6,7,8-tetrahydrofolate; that stretch reads SLLP.

Belongs to the Fmt family.

The catalysed reaction is L-methionyl-tRNA(fMet) + (6R)-10-formyltetrahydrofolate = N-formyl-L-methionyl-tRNA(fMet) + (6S)-5,6,7,8-tetrahydrofolate + H(+). Attaches a formyl group to the free amino group of methionyl-tRNA(fMet). The formyl group appears to play a dual role in the initiator identity of N-formylmethionyl-tRNA by promoting its recognition by IF2 and preventing the misappropriation of this tRNA by the elongation apparatus. This chain is Methionyl-tRNA formyltransferase, found in Bartonella bacilliformis (strain ATCC 35685 / KC583 / Herrer 020/F12,63).